The primary structure comprises 82 residues: MVAKEKIGTVVSDKMLNTRIVAVSDRVSHKNYGKVITRTKRYVAHDIESNSKIGDKVKIQETRPISKSKNWILVSILEKSST.

It belongs to the universal ribosomal protein uS17 family. Part of the 30S ribosomal subunit.

Its subcellular location is the plastid. It localises to the chloroplast. One of the primary rRNA binding proteins, it binds specifically to the 5'-end of 16S ribosomal RNA. The sequence is that of Small ribosomal subunit protein uS17c (rps17) from Emiliania huxleyi (Coccolithophore).